We begin with the raw amino-acid sequence, 8545 residues long: Nuclear anchorage protein 1 (8545 aa).

The segment at 1-325 (MSSSPPARPC…VITYVSQFVR (325 aa)) is actin-binding. Residues 1 to 8494 (MSSSPPARPC…QRSRWRRVLR (8494 aa)) are Cytoplasmic-facing. Residues 23 to 130 (KAQKNTFTRW…LIWQIILHFQ (108 aa)) form the Calponin-homology (CH) 1 domain. The segment at 148–197 (TEEPTSSAQPEVVVTAPSPTPSSKKSHSKVSSLSGSKTSLASGEKAPSSP) is disordered. A compositionally biased stretch (low complexity) spans 159–190 (VVVTAPSPTPSSKKSHSKVSSLSGSKTSLASG). Positions 222–328 (QSVEQVFLRW…YVSQFVRMFG (107 aa)) constitute a Calponin-homology (CH) 2 domain. 19 coiled-coil regions span residues 754-774 (NIRD…NHSR), 1072-1101 (SFFQ…LMVH), 1215-1236 (ADIL…EIQA), 1324-1384 (DTKK…QFED), 1574-1629 (RSIE…DLVK), 1725-1754 (ENRN…YEDA), 1950-1981 (PAII…NYNQ), 2103-2580 (DNIE…KKSD), 2682-2712 (SVKE…KIAK), 2852-2949 (IMQE…NIGK), 3002-3119 (DQIV…KTVV), 3178-3295 (DDEK…DEFK), 3346-3417 (QLQH…PEND), 3482-3552 (DELI…EKSL), 3587-3703 (KAEE…ELLD), 3781-3839 (ALKA…KEQL), 3902-4022 (AAHD…KTVV), 4114-4198 (LDVA…DEFK), and 4249-4320 (QLQH…PEND). Residues 3010-3019 (EAEDVTAKES) are compositionally biased toward basic and acidic residues. The tract at residues 3010–3033 (EAEDVTAKESAKKKKKDKKKSPQE) is disordered. 6 consecutive repeat copies span residues 3241-4143 (QVAK…KIDP), 4144-5097 (QVAK…KIDP), 5098-6000 (QVAK…KIDP), 6001-6903 (QVAK…KIDP), 6904-7806 (QVAK…KIDP), and 7807-8199 (QVAK…EERA). Residues 3241–8199 (QVAKDIKDSK…TLIPDLEERA (4959 aa)) are 6 X tandem repeat. Basic and acidic residues predominate over residues 3913–3922 (EAEDVTAKES). The segment at 3913-3936 (EAEDVTAKESAKKKKKDKKKSPQE) is disordered. A compositionally biased stretch (basic and acidic residues) spans 4372–4393 (ITREDGGDDNKSPDELIDDRGR). Residues 4372–4395 (ITREDGGDDNKSPDELIDDRGRST) are disordered. Coiled-coil stretches lie at residues 4436–4506 (DELI…EKSL), 4541–4657 (KAEE…ELLD), 4735–4793 (ALKA…KEQL), 4856–4976 (AAHD…KTVV), 5035–5152 (DDEK…DEFK), 5203–5274 (QLQH…PEND), 5339–5409 (DELI…EKSL), 5444–5560 (KAEE…ELLD), 5638–5696 (ALKA…KEQL), 5759–5879 (AAHD…KTVV), 5938–6055 (DDEK…DEFK), 6106–6177 (QLQH…PEND), 6242–6312 (DELI…EKSL), 6347–6463 (KAEE…ELLD), 6541–6599 (ALKA…KEQL), 6662–6782 (AAHD…KTVV), 6841–6958 (DDEK…DEFK), 7009–7080 (QLQH…PEND), 7145–7215 (DELI…EKSL), 7250–7366 (KAEE…ELLD), 7444–7502 (ALKA…KEQL), 7565–7685 (AAHD…KTVV), 7744–7861 (DDEK…DEFK), 7912–7983 (QLQH…PEND), 8048–8118 (DELI…EKSL), 8153–8204 (KAEE…IWER), 8273–8329 (VAED…DINN), and 8370–8390 (STSI…KEIE). Over residues 4867-4876 (EAEDVTAKES) the composition is skewed to basic and acidic residues. The tract at residues 4867–4890 (EAEDVTAKESAKKKKKDKKKSPQE) is disordered. The span at 5770–5779 (EAEDVTAKES) shows a compositional bias: basic and acidic residues. The interval 5770-5793 (EAEDVTAKESAKKKKKDKKKSPQE) is disordered. Over residues 6673–6682 (EAEDVTAKES) the composition is skewed to basic and acidic residues. The disordered stretch occupies residues 6673–6696 (EAEDVTAKESAKKKKKDKKKSPQE). Positions 7576–7585 (EAEDVTAKES) are enriched in basic and acidic residues. The segment at 7576–7599 (EAEDVTAKESAKKKKKDKKKSPQE) is disordered. Disordered regions lie at residues 8391-8418 (PRLQ…KPYD) and 8449-8480 (SDSE…LSEE). Residues 8401–8411 (DNEDDEDEEKG) are compositionally biased toward acidic residues. Residues 8451 to 8464 (SESRSEFDSLDSRS) show a composition bias toward basic and acidic residues. The KASH domain maps to 8486-8545 (RSRWRRVLRTALPLQALLVLLMGAACLVPHCDDEYCCQLLNNFAKSFDPSLEFVNGPPPF). Residues 8495 to 8513 (TALPLQALLVLLMGAACLV) form a helical; Anchor for type IV membrane protein membrane-spanning segment. Over 8514 to 8545 (PHCDDEYCCQLLNNFAKSFDPSLEFVNGPPPF) the chain is Perinuclear space.

The protein belongs to the nesprin family. In terms of assembly, interacts with F-actin via its N-terminal domain. Most likely interacts with unc-84; the interaction is probably required to recruit anc-1 to the nuclear envelope. In terms of tissue distribution, ubiquitously expressed in all postembryonic cells.

It localises to the nucleus outer membrane. The protein localises to the cytoplasm. It is found in the cytoskeleton. In terms of biological role, plays a central role in nuclear and mitochondrial anchoring. Probably connects nuclei to the cytoskeleton by interacting with unc-84 at the nuclear envelope and with F-actin in the cytoplasm, creating a bridge across the nuclear envelope between the cytoskeleton and the nucleus. Has a role in positioning of the cell body of the PVQ lumbar interneuron. This is Nuclear anchorage protein 1 from Caenorhabditis elegans.